The sequence spans 60 residues: DNA-binding protein 7c (60 aa).

The segment at aspartate 37 to lysine 60 is disordered. Over residues valine 46–lysine 60 the composition is skewed to basic and acidic residues.

It belongs to the 7 kDa DNA-binding/endoribonuclease P2 family. Monomer.

The protein localises to the cytoplasm. Functionally, can constrain negative DNA supercoils. May be involved in maintaining the integrity of the genome at high temperature. The chain is DNA-binding protein 7c from Acidianus hospitalis (strain W1).